Reading from the N-terminus, the 290-residue chain is Phosphatidylserine decarboxylase proenzyme (290 aa).

Residues aspartate 96, histidine 153, and serine 257 each act as charge relay system; for autoendoproteolytic cleavage activity in the active site. Serine 257 acts as the Schiff-base intermediate with substrate; via pyruvic acid; for decarboxylase activity in catalysis. Serine 257 is modified (pyruvic acid (Ser); by autocatalysis).

The protein belongs to the phosphatidylserine decarboxylase family. PSD-B subfamily. Prokaryotic type I sub-subfamily. As to quaternary structure, heterodimer of a large membrane-associated beta subunit and a small pyruvoyl-containing alpha subunit. The cofactor is pyruvate. In terms of processing, is synthesized initially as an inactive proenzyme. Formation of the active enzyme involves a self-maturation process in which the active site pyruvoyl group is generated from an internal serine residue via an autocatalytic post-translational modification. Two non-identical subunits are generated from the proenzyme in this reaction, and the pyruvate is formed at the N-terminus of the alpha chain, which is derived from the carboxyl end of the proenzyme. The autoendoproteolytic cleavage occurs by a canonical serine protease mechanism, in which the side chain hydroxyl group of the serine supplies its oxygen atom to form the C-terminus of the beta chain, while the remainder of the serine residue undergoes an oxidative deamination to produce ammonia and the pyruvoyl prosthetic group on the alpha chain. During this reaction, the Ser that is part of the protease active site of the proenzyme becomes the pyruvoyl prosthetic group, which constitutes an essential element of the active site of the mature decarboxylase.

It localises to the cell membrane. It carries out the reaction a 1,2-diacyl-sn-glycero-3-phospho-L-serine + H(+) = a 1,2-diacyl-sn-glycero-3-phosphoethanolamine + CO2. The protein operates within phospholipid metabolism; phosphatidylethanolamine biosynthesis; phosphatidylethanolamine from CDP-diacylglycerol: step 2/2. In terms of biological role, catalyzes the formation of phosphatidylethanolamine (PtdEtn) from phosphatidylserine (PtdSer). This is Phosphatidylserine decarboxylase proenzyme from Haemophilus influenzae (strain 86-028NP).